The primary structure comprises 365 residues: DNA replication and repair protein RecF (365 aa).

Position 30 to 37 (30 to 37) interacts with ATP; that stretch reads GRNAQGKT.

It belongs to the RecF family.

Its subcellular location is the cytoplasm. In terms of biological role, the RecF protein is involved in DNA metabolism; it is required for DNA replication and normal SOS inducibility. RecF binds preferentially to single-stranded, linear DNA. It also seems to bind ATP. This is DNA replication and repair protein RecF from Streptococcus pneumoniae (strain 70585).